We begin with the raw amino-acid sequence, 290 residues long: 3-deoxy-manno-octulosonate cytidylyltransferase, mitochondrial (290 aa).

The N-terminal 50 residues, 1-50 (MSVCSSSSSSQKTWIVNGILAGTAIAAAIGARAYLGRSKKFRSRVVGIIP), are a transit peptide targeting the mitochondrion.

The protein belongs to the KdsB family. The cofactor is Mg(2+). In terms of tissue distribution, expressed in roots, leaves, stems and siliques.

Its subcellular location is the mitochondrion outer membrane. The enzyme catalyses 3-deoxy-alpha-D-manno-oct-2-ulosonate + CTP = CMP-3-deoxy-beta-D-manno-octulosonate + diphosphate. It participates in nucleotide-sugar biosynthesis; CMP-3-deoxy-D-manno-octulosonate biosynthesis; CMP-3-deoxy-D-manno-octulosonate from 3-deoxy-D-manno-octulosonate and CTP: step 1/1. Inhibited by 2beta-deoxy-Kdo. Catalyzes the production of the sugar nucleotide CMP-3-deoxy-D-manno-octulosonate (CMP-KDO). CTP is the preferred nucleotide donor, but it can partially be replaced with UTP. Activates KDO during the biosynthesis of rhamnogalacturonan II (RG-II), a structurally complex pectic polysaccharide of the primary cell wall. RG-II is essential for the cell wall integrity of rapidly growing tissues and pollen tube growth and elongation. The protein is 3-deoxy-manno-octulosonate cytidylyltransferase, mitochondrial of Arabidopsis thaliana (Mouse-ear cress).